Reading from the N-terminus, the 206-residue chain is Small ribosomal subunit protein eS1 (206 aa).

Belongs to the eukaryotic ribosomal protein eS1 family.

In Methanocorpusculum labreanum (strain ATCC 43576 / DSM 4855 / Z), this protein is Small ribosomal subunit protein eS1.